We begin with the raw amino-acid sequence, 281 residues long: Probable endonuclease 4 (281 aa).

9 residues coordinate Zn(2+): histidine 69, histidine 109, glutamate 145, aspartate 179, histidine 182, histidine 216, aspartate 229, histidine 231, and glutamate 261.

The protein belongs to the AP endonuclease 2 family. Requires Zn(2+) as cofactor.

It catalyses the reaction Endonucleolytic cleavage to 5'-phosphooligonucleotide end-products.. Functionally, endonuclease IV plays a role in DNA repair. It cleaves phosphodiester bonds at apurinic or apyrimidinic (AP) sites, generating a 3'-hydroxyl group and a 5'-terminal sugar phosphate. This Aeromonas salmonicida (strain A449) protein is Probable endonuclease 4.